The sequence spans 504 residues: MTKLLEMKNITKKFGDVVALNNISISLETGEILSLCGENGSGKSTLMKVLCGIYPSGDYEGEIYFSGEKLTAKNIKDTEEKGISIIHQELTLVKNMSVLENMFLGNEITQAGITNDNKMYLRCKTLLEQVQLDIDPNTKVSALGLGQQQLVEIAKALNKQVRLLILDEPTASLTEKETDILLNLIKGLQAHNIACIYISHKLNEVKAISDKICVIRDGEHIGTQLAQGISEDDIITMMVGREITSLYPHEPHDIGKEILRVENLTAWHPTNTHIKRVDNANFILRKGEILGVAGLVGSGRTEMAQCIFGSYVGKYQGNIFLNNQKVKINKCAEAIANHIVMVPEDRKKHGIIPIMSVGKNITLSSLSQFCFGKKVINEPLEETIINQSIAKLKVKTSSPELAIGRLSGGNQQKAILAKCLLLHPNILILDEPTRGIDVGAKYEIYKLINQLAQEGMSIIVISSELPEVLGISDRVLVMHQGKVKADLINHHLTQEQVMEAALKE.

ABC transporter domains are found at residues 5–242 and 259–500; these read LEMK…VGRE and LRVE…VMEA. 37–44 contributes to the ATP binding site; the sequence is GENGSGKS.

Belongs to the ABC transporter superfamily. Xylose importer (TC 3.A.1.2.4) family. In terms of assembly, the complex is composed of two ATP-binding proteins (XylG), two transmembrane proteins (XylH) and a solute-binding protein (XylF).

It localises to the cell inner membrane. The catalysed reaction is D-xylose(out) + ATP + H2O = D-xylose(in) + ADP + phosphate + H(+). In terms of biological role, part of the ABC transporter complex XylFGH involved in xylose import. Responsible for energy coupling to the transport system. This is Xylose import ATP-binding protein XylG from Histophilus somni (strain 129Pt) (Haemophilus somnus).